We begin with the raw amino-acid sequence, 445 residues long: C-terminal-binding protein 2 (445 aa).

R22 bears the Asymmetric dimethylarginine mark. Residues S106, I186–T191, D210, C243–N249, A270–R272, and D296 contribute to the NAD(+) site. R272 is a catalytic residue. The active site involves E301. H321 serves as the catalytic Proton donor. H321 to W324 provides a ligand contact to NAD(+). Residues T414–Q445 form a disordered region. S428 carries the phosphoserine; by HIPK2 modification. Positions K434 to Q445 are enriched in basic and acidic residues.

This sequence belongs to the D-isomer specific 2-hydroxyacid dehydrogenase family. In terms of assembly, interacts with HIPK2, ZNF217 and PNN. Interacts with the transcription factors BKLF, delta EF1/AREB6/ZEB, EVI-1 and Friend of GATA (FOG) via the consensus motif P-X-[DNS]-L-[STVA]. Can form a complex with BKLF on a CACCC-box oligonucleotide. Can form homodimers or heterodimers of CTBP1 and CTBP2. Interacts with NRIP1 and WIZ. Interacts with PRDM16; represses white adipose tissue (WAT)-specific genes expression. Interacts with MCRIP1. Post-translationally, phosphorylation by HIPK2 on Ser-428 induces proteasomal degradation. In terms of tissue distribution, isoform 2 is specifically localized in synaptic ribbon (at protein level).

It is found in the nucleus. Its subcellular location is the synapse. Its function is as follows. Corepressor targeting diverse transcription regulators. Functions in brown adipose tissue (BAT) differentiation. Isoform 2 probably acts as a scaffold for specialized synapses. The protein is C-terminal-binding protein 2 (Ctbp2) of Rattus norvegicus (Rat).